A 193-amino-acid polypeptide reads, in one-letter code: dTTP/UTP pyrophosphatase (193 aa).

Asp-77 acts as the Proton acceptor in catalysis.

It belongs to the Maf family. YhdE subfamily. Requires a divalent metal cation as cofactor.

It localises to the cytoplasm. The catalysed reaction is dTTP + H2O = dTMP + diphosphate + H(+). It carries out the reaction UTP + H2O = UMP + diphosphate + H(+). Functionally, nucleoside triphosphate pyrophosphatase that hydrolyzes dTTP and UTP. May have a dual role in cell division arrest and in preventing the incorporation of modified nucleotides into cellular nucleic acids. The polypeptide is dTTP/UTP pyrophosphatase (Parabacteroides distasonis (strain ATCC 8503 / DSM 20701 / CIP 104284 / JCM 5825 / NCTC 11152)).